The primary structure comprises 187 residues: UPF0301 protein SG2023 (187 aa).

Belongs to the UPF0301 (AlgH) family.

The protein is UPF0301 protein SG2023 of Sodalis glossinidius (strain morsitans).